Consider the following 540-residue polypeptide: 2-isopropylmalate synthase (540 aa).

Residues 8-269 (VLIFDTTLRD…YFNPFFGREP (262 aa)) form the Pyruvate carboxyltransferase domain. Mn(2+)-binding residues include aspartate 17, histidine 208, histidine 210, and asparagine 244. The tract at residues 408 to 540 (QLRLVQVSCG…AVLADLRSGI (133 aa)) is regulatory domain.

The protein belongs to the alpha-IPM synthase/homocitrate synthase family. LeuA type 1 subfamily. Homodimer. Mn(2+) serves as cofactor.

Its subcellular location is the cytoplasm. The catalysed reaction is 3-methyl-2-oxobutanoate + acetyl-CoA + H2O = (2S)-2-isopropylmalate + CoA + H(+). It functions in the pathway amino-acid biosynthesis; L-leucine biosynthesis; L-leucine from 3-methyl-2-oxobutanoate: step 1/4. Catalyzes the condensation of the acetyl group of acetyl-CoA with 3-methyl-2-oxobutanoate (2-ketoisovalerate) to form 3-carboxy-3-hydroxy-4-methylpentanoate (2-isopropylmalate). The sequence is that of 2-isopropylmalate synthase from Prochlorococcus marinus (strain MIT 9313).